The chain runs to 803 residues: Volume-regulated anion channel subunit LRRC8C (803 aa).

The Cytoplasmic portion of the chain corresponds to 1-22 (MIPVTEFRQFSEQQPAFRVLKP). Residues 23-43 (WWDVFTDYLSVAMLMIGVFGC) form a helical membrane-spanning segment. Residues 44-125 (TLQVMQDKII…YERALHWYAK (82 aa)) are Extracellular-facing. Intrachain disulfides connect C54–C308 and C115–C293. N64 and N70 each carry an N-linked (GlcNAc...) asparagine glycan. The chain crosses the membrane as a helical span at residues 126-146 (YFPYLVLIHTLVFMLCSNFWF). The Cytoplasmic segment spans residues 147-266 (KFPGSSSKIE…ILYAMYVRQT (120 aa)). The interval 177–209 (EVSGEDSEEKDNRKNNMSRSNTTQSGPEGSLVN) is disordered. A compositionally biased stretch (polar residues) spans 191–209 (NNMSRSNTTQSGPEGSLVN). S212 and S215 each carry phosphoserine. Residues 267-287 (VLKVIKFLIIIAYNSALVSKV) traverse the membrane as a helical segment. Residues 288–320 (QFTVDCNVDIQDMTGYKNFSCNHTMAHLFSKLS) are Extracellular-facing. The helical transmembrane segment at 321–341 (FCYLCFVSIYGLTCLYTLYWL) threads the bilayer. Topologically, residues 342 to 803 (FYRSLKEYSF…SDVREQMKTE (462 aa)) are cytoplasmic. LRR repeat units lie at residues 397 to 419 (ENKLKQLNLNNEWTPDKLRQKLQ), 420 to 443 (TNAHNRLELPLIMLSGLPDTVFEI), 446 to 465 (LQSLKLEIIKNVMIPATIAQ), 468 to 490 (NLQELSLHQCSVKIHSAALSFLK), 492 to 513 (NLKVLSVKFDDMRELPPWMYGL), 515 to 536 (NLEELYLVGSLSHDISRNVTLE), 543 to 563 (SLKILSIKSNVSKIPQAVVDV), 566 to 586 (HLQKMCIHNDGTKLVMLNNLK), 590 to 611 (NLTELELVHCDLERIPHAVFSL), 613 to 634 (SLQELDLKENNLKSIEEIVSFQ), 638 to 659 (KLTVLKLWHNSITYIPEHIKKL), 661 to 682 (SLERLSFSHNKIEVLPSHLFLC), 684 to 705 (KIRYLDLSYNDIRFIPPEIGVL), 707 to 728 (SLQYFSITCNKVESLPDELYFC), 730 to 751 (KLKTLKIGKNSLSVLSPKIGNL), 753 to 774 (FLSYLDVKGNHFEILPPELGDC), and 776 to 799 (ALKRAGLVVEDALFETLPSDVREQ).

Belongs to the LRRC8 family. As to quaternary structure, heterohexamer; oligomerizes with other LRRC8 proteins (LRRC8A, LRRC8B, LRRC8D and/or LRRC8E) to form a heterohexamer. Homoheptamer; inactive, likely because it is not targeted to the plasma membrane in the absence of LRRC8A. In vivo, the subunit composition may depend primarily on expression levels, and heterooligomeric channels containing various proportions of the different LRRC8 proteins may coexist.

Its subcellular location is the cell membrane. It is found in the endoplasmic reticulum membrane. It catalyses the reaction chloride(in) = chloride(out). It carries out the reaction iodide(out) = iodide(in). The catalysed reaction is taurine(out) = taurine(in). The enzyme catalyses 2',3'-cGAMP(out) = 2',3'-cGAMP(in). Non-essential component of the volume-regulated anion channel (VRAC, also named VSOAC channel), an anion channel required to maintain a constant cell volume in response to extracellular or intracellular osmotic changes. The VRAC channel conducts iodide better than chloride and can also conduct organic osmolytes like taurine. Plays a redundant role in the efflux of amino acids, such as aspartate and glutamate, in response to osmotic stress. The VRAC channel also mediates transport of immunoreactive cyclic dinucleotide GMP-AMP (2'-3'-cGAMP), an immune messenger produced in response to DNA virus in the cytosol. Channel activity requires LRRC8A plus at least one other family member (LRRC8B, LRRC8C, LRRC8D or LRRC8E); channel characteristics depend on the precise subunit composition. This is Volume-regulated anion channel subunit LRRC8C from Bos taurus (Bovine).